A 458-amino-acid polypeptide reads, in one-letter code: LysM domain-containing protein ARB_05157 (458 aa).

Residues 1 to 19 (MVSLKVCFLLLASSELAFG) form the signal peptide. The 47-residue stretch at 157–203 (AFHLVKQGEDCGTISATYGITSAQFLAWNPSAGKDCTGLWANAYACV) folds into the LysM 1 domain. Residues 210–232 (PPKTTSQAPQPTPTKPSNGIETP) are disordered. Positions 212 to 229 (KTTSQAPQPTPTKPSNGI) are enriched in polar residues. LysM domains are found at residues 245–291 (KFHL…YACV), 325–371 (KFYL…YSCV), and 409–455 (KFHF…YLCV).

It is found in the secreted. Might have a role in sequestration of chitin oligosaccharides (breakdown products of fungal cell walls that are released during invasion and act as triggers of host immunity) to dampen host defense. The sequence is that of LysM domain-containing protein ARB_05157 from Arthroderma benhamiae (strain ATCC MYA-4681 / CBS 112371) (Trichophyton mentagrophytes).